We begin with the raw amino-acid sequence, 219 residues long: Germin-like protein subfamily 2 member 3 (219 aa).

The signal sequence occupies residues 1–22 (MATSMIPIFVTFMLVAAHMALA). Cysteines 31 and 46 form a disulfide. The Cupin type-1 domain maps to 60-209 (IGLATAAATA…AFGAAAPEIQ (150 aa)). Asn-70 carries an N-linked (GlcNAc...) asparagine glycan. Mn(2+) contacts are provided by His-109, His-111, Glu-116, and His-155.

The protein belongs to the germin family. As to quaternary structure, oligomer (believed to be a pentamer but probably hexamer).

It localises to the secreted. Its subcellular location is the extracellular space. It is found in the apoplast. Its function is as follows. May play a role in plant defense. Probably has no oxalate oxidase activity even if the active site is conserved. The sequence is that of Germin-like protein subfamily 2 member 3 (GLP8) from Arabidopsis thaliana (Mouse-ear cress).